The sequence spans 292 residues: tRNA (guanine-N(7)-)-methyltransferase (292 aa).

A disordered region spans residues Met-1 to Lys-52. Residues Gly-106, Glu-129–Ile-130, Asn-166–Ala-167, and Cys-186 contribute to the S-adenosyl-L-methionine site. Residue Asp-189 is part of the active site. S-adenosyl-L-methionine is bound at residue Thr-264–Glu-266.

This sequence belongs to the class I-like SAM-binding methyltransferase superfamily. TrmB family. In terms of assembly, forms a complex with TRM82.

It is found in the nucleus. It carries out the reaction guanosine(46) in tRNA + S-adenosyl-L-methionine = N(7)-methylguanosine(46) in tRNA + S-adenosyl-L-homocysteine. The protein operates within tRNA modification; N(7)-methylguanine-tRNA biosynthesis. Its function is as follows. Catalyzes the formation of N(7)-methylguanine at position 46 (m7G46) in tRNA. The sequence is that of tRNA (guanine-N(7)-)-methyltransferase from Debaryomyces hansenii (strain ATCC 36239 / CBS 767 / BCRC 21394 / JCM 1990 / NBRC 0083 / IGC 2968) (Yeast).